The chain runs to 214 residues: Probable transaldolase (214 aa).

K83 serves as the catalytic Schiff-base intermediate with substrate.

This sequence belongs to the transaldolase family. Type 3B subfamily.

The protein localises to the cytoplasm. It catalyses the reaction D-sedoheptulose 7-phosphate + D-glyceraldehyde 3-phosphate = D-erythrose 4-phosphate + beta-D-fructose 6-phosphate. Its pathway is carbohydrate degradation; pentose phosphate pathway; D-glyceraldehyde 3-phosphate and beta-D-fructose 6-phosphate from D-ribose 5-phosphate and D-xylulose 5-phosphate (non-oxidative stage): step 2/3. In terms of biological role, transaldolase is important for the balance of metabolites in the pentose-phosphate pathway. The chain is Probable transaldolase from Geobacter sp. (strain M21).